A 559-amino-acid chain; its full sequence is Nuclear envelope integral membrane protein (559 aa).

The signal sequence occupies residues 1 to 15 (MRLLTLALLVAGSLA). Residues asparagine 67, asparagine 81, and asparagine 114 are each glycosylated (N-linked (GlcNAc...) asparagine). A run of 5 helical transmembrane segments spans residues 164 to 184 (YTSG…FIVW), 192 to 212 (IGVP…HFAW), 218 to 238 (IMIE…LISM), 267 to 287 (LIYF…ALII), and 290 to 310 (ICRG…KAVW). Asparagine 408 and asparagine 465 each carry an N-linked (GlcNAc...) asparagine glycan. 2 disordered regions span residues 475–494 (RRDS…PRMP) and 510–559 (KNGR…DADE). Over residues 517-526 (PSSSTASGMT) the composition is skewed to polar residues. Positions 530-539 (YMRKARRIDA) are enriched in basic and acidic residues.

It belongs to the NEMP family.

It localises to the nucleus inner membrane. Contributes to nuclear envelope stiffness in germ cells. Required for fertility. This Caenorhabditis elegans protein is Nuclear envelope integral membrane protein.